Here is a 210-residue protein sequence, read N- to C-terminus: Probable nicotinate-nucleotide adenylyltransferase (210 aa).

The protein belongs to the NadD family.

The enzyme catalyses nicotinate beta-D-ribonucleotide + ATP + H(+) = deamido-NAD(+) + diphosphate. The protein operates within cofactor biosynthesis; NAD(+) biosynthesis; deamido-NAD(+) from nicotinate D-ribonucleotide: step 1/1. Functionally, catalyzes the reversible adenylation of nicotinate mononucleotide (NaMN) to nicotinic acid adenine dinucleotide (NaAD). In Vesicomyosocius okutanii subsp. Calyptogena okutanii (strain HA), this protein is Probable nicotinate-nucleotide adenylyltransferase.